Reading from the N-terminus, the 483-residue chain is Nucleolar protein 4 (483 aa).

Disordered regions lie at residues 210–418 and 435–483; these read QQDE…PIPS and SESR…DPQI. A compositionally biased stretch (acidic residues) spans 211–225; sequence QDEDESSIESDEFDM. Composition is skewed to polar residues over residues 229–254, 262–271, and 302–317; these read TRMS…TVHG, AESSNGNETL, and QPLN…QLTS. Composition is skewed to basic and acidic residues over residues 319–330 and 340–350; these read FRIDDQGSDGKN and LKMEREARENG. Positions 351–363 are enriched in polar residues; sequence SKSPAHSYSSYDS. 3 stretches are compositionally biased toward basic and acidic residues: residues 364-374, 391-409, and 435-451; these read GKNESVDRGAE, HEDS…ERLK, and SESR…KAQD. Over residues 467–483 the composition is skewed to polar residues; it reads ATYSTATVPGSQEDPQI.

Its subcellular location is the nucleus. The protein resides in the nucleolus. This Mus musculus (Mouse) protein is Nucleolar protein 4 (Nol4).